The primary structure comprises 261 residues: tRNA U34 carboxymethyltransferase (261 aa).

Residues Lys25, Trp39, Lys44, Gly63, 114 to 115 (VE), Tyr135, and Arg250 contribute to the carboxy-S-adenosyl-L-methionine site.

Belongs to the class I-like SAM-binding methyltransferase superfamily. CmoB family. As to quaternary structure, homotetramer.

It carries out the reaction carboxy-S-adenosyl-L-methionine + 5-hydroxyuridine(34) in tRNA = 5-carboxymethoxyuridine(34) in tRNA + S-adenosyl-L-homocysteine + H(+). Its function is as follows. Catalyzes carboxymethyl transfer from carboxy-S-adenosyl-L-methionine (Cx-SAM) to 5-hydroxyuridine (ho5U) to form 5-carboxymethoxyuridine (cmo5U) at position 34 in tRNAs. The polypeptide is tRNA U34 carboxymethyltransferase (Helicobacter pylori (strain Shi470)).